We begin with the raw amino-acid sequence, 258 residues long: Imidazole glycerol phosphate synthase subunit HisF (258 aa).

Residues Asp-11 and Asp-130 contribute to the active site.

The protein belongs to the HisA/HisF family. In terms of assembly, heterodimer of HisH and HisF.

It localises to the cytoplasm. It catalyses the reaction 5-[(5-phospho-1-deoxy-D-ribulos-1-ylimino)methylamino]-1-(5-phospho-beta-D-ribosyl)imidazole-4-carboxamide + L-glutamine = D-erythro-1-(imidazol-4-yl)glycerol 3-phosphate + 5-amino-1-(5-phospho-beta-D-ribosyl)imidazole-4-carboxamide + L-glutamate + H(+). It participates in amino-acid biosynthesis; L-histidine biosynthesis; L-histidine from 5-phospho-alpha-D-ribose 1-diphosphate: step 5/9. Its function is as follows. IGPS catalyzes the conversion of PRFAR and glutamine to IGP, AICAR and glutamate. The HisF subunit catalyzes the cyclization activity that produces IGP and AICAR from PRFAR using the ammonia provided by the HisH subunit. The protein is Imidazole glycerol phosphate synthase subunit HisF of Xanthomonas campestris pv. campestris (strain 8004).